We begin with the raw amino-acid sequence, 121 residues long: Large ribosomal subunit protein bL21 (121 aa).

The protein belongs to the bacterial ribosomal protein bL21 family. Part of the 50S ribosomal subunit. Contacts protein L20.

Functionally, this protein binds to 23S rRNA in the presence of protein L20. In Synechococcus sp. (strain CC9605), this protein is Large ribosomal subunit protein bL21.